The chain runs to 148 residues: Small ribosomal subunit protein bS6 (148 aa).

Residues 96 to 148 (HEEGQSAMLTRRDDRRERDGDDRPRRREGGFDRGDRGDRGPRRPRDTEAGEGA) are disordered.

Belongs to the bacterial ribosomal protein bS6 family.

In terms of biological role, binds together with bS18 to 16S ribosomal RNA. This chain is Small ribosomal subunit protein bS6, found in Brucella canis (strain ATCC 23365 / NCTC 10854 / RM-666).